A 275-amino-acid polypeptide reads, in one-letter code: Fructose-2,6-bisphosphatase TIGAR (275 aa).

His11 acts as the Tele-phosphohistidine intermediate in catalysis. Residue Glu89 is the Proton donor/acceptor of the active site.

It belongs to the phosphoglycerate mutase family.

Its subcellular location is the cytoplasm. It localises to the nucleus. The protein localises to the mitochondrion. The catalysed reaction is beta-D-fructose 2,6-bisphosphate + H2O = beta-D-fructose 6-phosphate + phosphate. Functionally, fructose-bisphosphatase hydrolyzing fructose-2,6-bisphosphate as well as fructose-1,6-bisphosphate. Acts as a negative regulator of glycolysis by lowering intracellular levels of fructose-2,6-bisphosphate in a p53/TP53-dependent manner, resulting in the pentose phosphate pathway (PPP) activation and NADPH production. Contributes to the generation of reduced glutathione to cause a decrease in intracellular reactive oxygen species (ROS) content, correlating with its ability to protect cells from oxidative or metabolic stress-induced cell death. May play a role in mitophagy inhibition. This chain is Fructose-2,6-bisphosphatase TIGAR, found in Xenopus tropicalis (Western clawed frog).